The sequence spans 318 residues: GTP cyclohydrolase MptA (318 aa).

This sequence belongs to the GTP cyclohydrolase IV family. As to quaternary structure, homodimer. Requires Fe(2+) as cofactor.

The enzyme catalyses GTP + H2O = 7,8-dihydroneopterin 2',3'-cyclic phosphate + formate + diphosphate + H(+). It functions in the pathway cofactor biosynthesis; 5,6,7,8-tetrahydromethanopterin biosynthesis. Converts GTP to 7,8-dihydro-D-neopterin 2',3'-cyclic phosphate, the first intermediate in the biosynthesis of coenzyme methanopterin. This Methanothermobacter thermautotrophicus (strain ATCC 29096 / DSM 1053 / JCM 10044 / NBRC 100330 / Delta H) (Methanobacterium thermoautotrophicum) protein is GTP cyclohydrolase MptA.